Here is a 149-residue protein sequence, read N- to C-terminus: Aquaporin-like protein 2 (149 aa).

The interval 1–35 (MSNESNDLEKNISHLDPTGVDNAYIPPEQPETKHS) is disordered. Topologically, residues 1 to 47 (MSNESNDLEKNISHLDPTGVDNAYIPPEQPETKHSRFNIDRDTLRNH) are cytoplasmic. A helical transmembrane segment spans residues 48 to 68 (FIAAVGEFCGTFMFLWCAYVI). Residues 69–89 (CNVANHDVALTTEPEGSHPGQ) lie on the Extracellular side of the membrane. Residues 90–110 (LIMIALGFGFSVMFSIWCFWW) form a helical membrane-spanning segment. Residues 111–149 (GFEPSRFSLFVFGQSHLSSQMCSDVVSSDHCWDGCWWCR) are Cytoplasmic-facing.

The protein belongs to the MIP/aquaporin (TC 1.A.8) family.

It localises to the endoplasmic reticulum membrane. The protein resides in the cell membrane. Functionally, water channel required to facilitate the transport of water across membranes. Involved in freeze tolerance, osmotolerance and cell flocculation in liquid cultures. Is non-functional in most laboratory strains. In Saccharomyces cerevisiae (strain RM11-1a) (Baker's yeast), this protein is Aquaporin-like protein 2 (AQY2-2).